The following is a 353-amino-acid chain: 4-hydroxy-2-oxovalerate aldolase 2 (353 aa).

Residues 14 to 266 (VRMTDTSLRD…KTGIDFFDIA (253 aa)) enclose the Pyruvate carboxyltransferase domain. 22 to 23 (RD) is a binding site for substrate. Asp-23 serves as a coordination point for Mn(2+). The Proton acceptor role is filled by His-26. Substrate-binding residues include Ser-176 and His-205. Residues His-205 and His-207 each coordinate Mn(2+). Position 296 (Tyr-296) interacts with substrate.

The protein belongs to the 4-hydroxy-2-oxovalerate aldolase family.

It carries out the reaction (S)-4-hydroxy-2-oxopentanoate = acetaldehyde + pyruvate. The sequence is that of 4-hydroxy-2-oxovalerate aldolase 2 from Mycobacterium sp. (strain JLS).